The chain runs to 118 residues: MNPEEIRQRRLQEMQAKAQEQGAQDPEAQRQMQEQQMQYEMQKQKILRQILSEEARSRLARIKLAKPQFAEQVEMQLIQLAQAGKLPIPLTDEYFKGLLDRIYEMNKPAKKEITIMRR.

Basic and acidic residues predominate over residues 1–12; that stretch reads MNPEEIRQRRLQ. Residues 1-33 form a disordered region; it reads MNPEEIRQRRLQEMQAKAQEQGAQDPEAQRQMQ. Positions 24–33 are enriched in low complexity; sequence QDPEAQRQMQ.

This sequence belongs to the PDCD5 family.

The chain is DNA-binding protein MmarC6_0793 from Methanococcus maripaludis (strain C6 / ATCC BAA-1332).